Consider the following 337-residue polypeptide: Large ribosomal subunit protein uL3 (337 aa).

Positions 1–20 (MASIHRPKRGSLAFSPRKRA) are disordered.

This sequence belongs to the universal ribosomal protein uL3 family. Part of the 50S ribosomal subunit. Forms a cluster with proteins L14 and L24e.

One of the primary rRNA binding proteins, it binds directly near the 3'-end of the 23S rRNA, where it nucleates assembly of the 50S subunit. This is Large ribosomal subunit protein uL3 from Methanosarcina barkeri (strain Fusaro / DSM 804).